Consider the following 474-residue polypeptide: Bifunctional protein HldE (474 aa).

Positions 1–317 are ribokinase; the sequence is MKLSMPRFDQ…RRAIQRSEGS (317 aa). Position 194-197 (194-197) interacts with ATP; that stretch reads NLSE. Asp263 is a catalytic residue. A cytidylyltransferase region spans residues 343–474; that stretch reads FTNGCFDILH…AIVEKIRNNE (132 aa).

The protein in the N-terminal section; belongs to the carbohydrate kinase PfkB family. This sequence in the C-terminal section; belongs to the cytidylyltransferase family. As to quaternary structure, homodimer.

It carries out the reaction D-glycero-beta-D-manno-heptose 7-phosphate + ATP = D-glycero-beta-D-manno-heptose 1,7-bisphosphate + ADP + H(+). The catalysed reaction is D-glycero-beta-D-manno-heptose 1-phosphate + ATP + H(+) = ADP-D-glycero-beta-D-manno-heptose + diphosphate. It functions in the pathway nucleotide-sugar biosynthesis; ADP-L-glycero-beta-D-manno-heptose biosynthesis; ADP-L-glycero-beta-D-manno-heptose from D-glycero-beta-D-manno-heptose 7-phosphate: step 1/4. The protein operates within nucleotide-sugar biosynthesis; ADP-L-glycero-beta-D-manno-heptose biosynthesis; ADP-L-glycero-beta-D-manno-heptose from D-glycero-beta-D-manno-heptose 7-phosphate: step 3/4. Catalyzes the phosphorylation of D-glycero-D-manno-heptose 7-phosphate at the C-1 position to selectively form D-glycero-beta-D-manno-heptose-1,7-bisphosphate. Functionally, catalyzes the ADP transfer from ATP to D-glycero-beta-D-manno-heptose 1-phosphate, yielding ADP-D-glycero-beta-D-manno-heptose. The chain is Bifunctional protein HldE from Pseudomonas fluorescens (strain SBW25).